The chain runs to 270 residues: Protein tonB2 (270 aa).

Topologically, residues 1–51 (MATPQPVDARTQPWRETPGGDLVALGRPVRQALHLVRHNPAQGRVLSRRET) are cytoplasmic. The helical transmembrane segment at 52–69 (ILLVLFALTLHGAVIHWL) threads the bilayer. Residues 70-270 (SQQRTPALPE…VSVPIDFKLN (201 aa)) lie on the Periplasmic side of the membrane. The segment at 80–187 (VPPQVPPMTI…LTPPSANAGY (108 aa)) is disordered. The span at 94–118 (PAPPVVEPPPPEPLPPVVEEPPPPV) shows a compositional bias: pro residues. Over residues 133–143 (PKPKPKPKPQP) the composition is skewed to basic residues. A compositionally biased stretch (pro residues) spans 144 to 180 (RPKPAPKAVEPAPPAPPQPAAPPAPPAPAAAPAPLTP). The TonB C-terminal domain occupies 180–270 (PPSANAGYLH…VSVPIDFKLN (91 aa)).

It belongs to the TonB family. Homodimer. Forms a complex with the accessory proteins ExbB and ExbD.

It localises to the cell inner membrane. Interacts with outer membrane receptor proteins that carry out high-affinity binding and energy dependent uptake into the periplasmic space of specific substrates. It could act to transduce energy from the cytoplasmic membrane to specific energy-requiring processes in the outer membrane, resulting in the release into the periplasm of ligands bound by these outer membrane proteins. The sequence is that of Protein tonB2 (tonB2) from Pseudomonas aeruginosa (strain ATCC 15692 / DSM 22644 / CIP 104116 / JCM 14847 / LMG 12228 / 1C / PRS 101 / PAO1).